The primary structure comprises 362 residues: Bifunctional nitrilase/nitrile hydratase NIT4 (362 aa).

Residues 31–307 (VRATVVQAST…EALITADLDL (277 aa)) form the CN hydrolase domain. Catalysis depends on Glu71, which acts as the Proton acceptor. Lys162 functions as the Proton donor in the catalytic mechanism. Cys196 functions as the Nucleophile in the catalytic mechanism.

Belongs to the carbon-nitrogen hydrolase superfamily. Nitrilase family.

It catalyses the reaction a nitrile + 2 H2O = a carboxylate + NH4(+). The enzyme catalyses 3-cyano-L-alanine + 2 H2O = L-aspartate + NH4(+). Its function is as follows. Highly specific for beta-cyano-L-alanine (Ala(CN)). Low activity with 3-phenylpropionitrile (PPN). Not associated with auxin production but may be involved in cyanide detoxification. This is Bifunctional nitrilase/nitrile hydratase NIT4 (NIT4) from Oryza sativa subsp. japonica (Rice).